The primary structure comprises 319 residues: tRNA uridine(34) hydroxylase (319 aa).

In terms of domain architecture, Rhodanese spans 127–221 (KQEDTVIIDA…YGKDPEVQGE (95 aa)). Cysteine 181 functions as the Cysteine persulfide intermediate in the catalytic mechanism.

It belongs to the TrhO family.

It carries out the reaction uridine(34) in tRNA + AH2 + O2 = 5-hydroxyuridine(34) in tRNA + A + H2O. Its function is as follows. Catalyzes oxygen-dependent 5-hydroxyuridine (ho5U) modification at position 34 in tRNAs. This chain is tRNA uridine(34) hydroxylase, found in Bacillus cereus (strain ATCC 10987 / NRS 248).